A 625-amino-acid polypeptide reads, in one-letter code: Endoglucanase 13 (625 aa).

Residues 1–34 (MAATMNKTPATTFLLIPAAASLVLLLAAAASVEA) form the signal peptide. D91 functions as the Nucleophile in the catalytic mechanism. H427 is a catalytic residue. N440 carries N-linked (GlcNAc...) asparagine glycosylation. Active-site residues include D479 and E488. Residues 509 to 530 (ADNTPEYTPAPNAPSPSNGGSP) form a disordered region.

Belongs to the glycosyl hydrolase 9 (cellulase E) family. Expressed in roots and flowers.

It is found in the secreted. The enzyme catalyses Endohydrolysis of (1-&gt;4)-beta-D-glucosidic linkages in cellulose, lichenin and cereal beta-D-glucans.. This is Endoglucanase 13 (GLU6) from Oryza sativa subsp. japonica (Rice).